The chain runs to 370 residues: MKEPIWAEINLEAIRHNIKEIRKMVGPNREIMAVVKANGYGHGAVPVARVALEAGATRLAVARLSEAQELRRAGLKVPILLLGYISPDQIGDALEYNVTLTVFRFDLAKKIAAIAQGRGQRATVHLKVDTGMGRIGFTPDEEGLAEITAVCALNGLDVEGIYTHFATADEQDKSYTRWQFKRFMLVLNRLEEQGITFSLRHCANSAAIMEFPETYLDLVRPGIILYGLYPSEEVDKGKLLLQPAMTLKARITHVKKVNSGTKISYGCTYTVPQETDIASLPLGYADGYPRLLSSKGQVLVKGKRARVVGRVCMDQCMVDVGHIAEVKVHDEVIIFGGAELPVEEVATWLGTINYEVVCWVGSRVPRVYIG.

Lys-36 serves as the catalytic Proton acceptor; specific for D-alanine. Lys-36 bears the N6-(pyridoxal phosphate)lysine mark. Arg-134 serves as a coordination point for substrate. The active-site Proton acceptor; specific for L-alanine is the Tyr-265. Met-313 contributes to the substrate binding site.

Belongs to the alanine racemase family. Pyridoxal 5'-phosphate serves as cofactor.

It catalyses the reaction L-alanine = D-alanine. The protein operates within amino-acid biosynthesis; D-alanine biosynthesis; D-alanine from L-alanine: step 1/1. In terms of biological role, catalyzes the interconversion of L-alanine and D-alanine. May also act on other amino acids. This Desulforamulus reducens (strain ATCC BAA-1160 / DSM 100696 / MI-1) (Desulfotomaculum reducens) protein is Alanine racemase (alr).